We begin with the raw amino-acid sequence, 583 residues long: Cysteine/serine-rich nuclear protein 1 (583 aa).

2 disordered regions span residues 1–79 (MTGL…APRE) and 306–381 (AESL…RSGV). A compositionally biased stretch (low complexity) spans 18–41 (SSSSSSSFSSRLSLSSFPASSASP). Positions 54–69 (APQSDQDSCGLQSFTP) are enriched in polar residues. Residues 335–361 (PVSSELGDSSCSSDMTDSSTTLSSGSS) are compositionally biased toward low complexity. The span at 364–373 (PNHPAHPSLP) shows a compositional bias: pro residues.

The protein belongs to the AXUD1 family. Widely expressed with highest levels in thymus and lung. Low levels detected in naive T-cells.

Its subcellular location is the nucleus. In terms of biological role, binds to the consensus sequence 5'-AGAGTG-3' and has transcriptional activator activity. May have a tumor-suppressor function. May play a role in apoptosis. This Mus musculus (Mouse) protein is Cysteine/serine-rich nuclear protein 1 (Csrnp1).